We begin with the raw amino-acid sequence, 352 residues long: GTPase Obg (352 aa).

One can recognise an Obg domain in the interval 1–159; it reads MQFIDQAEIQ…RMLRLELKLL (159 aa). Positions 160–330 constitute an OBG-type G domain; sequence AEVGIIGLPN…LMQEIWGLLE (171 aa). GTP contacts are provided by residues 166–173, 191–195, 213–216, 280–283, and 311–313; these read GLPNAGKS, FTTLV, DIPG, NKVD, and SAV. The Mg(2+) site is built by serine 173 and threonine 193.

This sequence belongs to the TRAFAC class OBG-HflX-like GTPase superfamily. OBG GTPase family. In terms of assembly, monomer. Mg(2+) serves as cofactor.

The protein resides in the cytoplasm. Functionally, an essential GTPase which binds GTP, GDP and possibly (p)ppGpp with moderate affinity, with high nucleotide exchange rates and a fairly low GTP hydrolysis rate. Plays a role in control of the cell cycle, stress response, ribosome biogenesis and in those bacteria that undergo differentiation, in morphogenesis control. In Trichodesmium erythraeum (strain IMS101), this protein is GTPase Obg.